The chain runs to 127 residues: Protein ApaG (127 aa).

Residues 3–127 (EGKKYEIAVK…FILSVPRILH (125 aa)) form the ApaG domain.

The protein is Protein ApaG of Nitrosospira multiformis (strain ATCC 25196 / NCIMB 11849 / C 71).